The chain runs to 393 residues: Acetylornithine aminotransferase (393 aa).

Pyridoxal 5'-phosphate is bound by residues 96-97 (GT) and Phe-129. Arg-132 provides a ligand contact to N(2)-acetyl-L-ornithine. 214 to 217 (DEVQ) contributes to the pyridoxal 5'-phosphate binding site. Lys-243 is subject to N6-(pyridoxal phosphate)lysine. Ser-271 contributes to the N(2)-acetyl-L-ornithine binding site. Thr-272 is a pyridoxal 5'-phosphate binding site.

This sequence belongs to the class-III pyridoxal-phosphate-dependent aminotransferase family. ArgD subfamily. As to quaternary structure, homodimer. Pyridoxal 5'-phosphate serves as cofactor.

The protein resides in the cytoplasm. The catalysed reaction is N(2)-acetyl-L-ornithine + 2-oxoglutarate = N-acetyl-L-glutamate 5-semialdehyde + L-glutamate. The protein operates within amino-acid biosynthesis; L-arginine biosynthesis; N(2)-acetyl-L-ornithine from L-glutamate: step 4/4. The polypeptide is Acetylornithine aminotransferase (Rhodobacter capsulatus (strain ATCC BAA-309 / NBRC 16581 / SB1003)).